A 473-amino-acid polypeptide reads, in one-letter code: MQQPDIHFIPEMRRIRRIHFVGVGGAGMSGIAEVLHNQGYLISGSDLRESDVTRRLSAMGMTIYVGHHAKNVHGVDVVVNSSAVDEANPELLEARQQRIPVVRRAEMLGELMRYRHGIAVAGTHGKTTTTSLIASIFAEGDKDPTFVIGGLLNSAGTNAALGASRYLVAEADESDASFLHLQPMVAVVTNIDADHMDTYGGDFGTLKKTFVEFLHNLPFYGVAVMCGDDPVITSLIPDIARTVITYGFSEDCDFKAYDVKQESGKQRFKIKRPEGEPLDIYLNMPGQHNVLNATAAVAVATDEGIDDIAIQQGLAQFMGVGRRFQIYGDYPLPQGGSVMLVDDYGHHPREVAATIRAVRDSWPDRRLFMVYQPHRYTRTRDLYEDFVEVLSSVDQLVLLEVYAAGEEPIPGADGRHLSRTIRTRGLVDPIFVEGIEGVPAVVKDLVKPGDIIITQGAGNVGSLAPTLAKKKFA.

Residue 122-128 (GTHGKTT) participates in ATP binding.

Belongs to the MurCDEF family.

Its subcellular location is the cytoplasm. The catalysed reaction is UDP-N-acetyl-alpha-D-muramate + L-alanine + ATP = UDP-N-acetyl-alpha-D-muramoyl-L-alanine + ADP + phosphate + H(+). The protein operates within cell wall biogenesis; peptidoglycan biosynthesis. Functionally, cell wall formation. The polypeptide is UDP-N-acetylmuramate--L-alanine ligase (Teredinibacter turnerae (strain ATCC 39867 / T7901)).